Consider the following 206-residue polypeptide: Small ribosomal subunit protein uS4 (206 aa).

One can recognise an S4 RNA-binding domain in the interval 96–156; that stretch reads GRLDNVVYRM…EKAKKQSRVK (61 aa).

It belongs to the universal ribosomal protein uS4 family. In terms of assembly, part of the 30S ribosomal subunit. Contacts protein S5. The interaction surface between S4 and S5 is involved in control of translational fidelity.

In terms of biological role, one of the primary rRNA binding proteins, it binds directly to 16S rRNA where it nucleates assembly of the body of the 30S subunit. Its function is as follows. With S5 and S12 plays an important role in translational accuracy. This chain is Small ribosomal subunit protein uS4, found in Erwinia tasmaniensis (strain DSM 17950 / CFBP 7177 / CIP 109463 / NCPPB 4357 / Et1/99).